The chain runs to 371 residues: Aminomethyltransferase (371 aa).

The protein belongs to the GcvT family. In terms of assembly, the glycine cleavage system is composed of four proteins: P, T, L and H.

It carries out the reaction N(6)-[(R)-S(8)-aminomethyldihydrolipoyl]-L-lysyl-[protein] + (6S)-5,6,7,8-tetrahydrofolate = N(6)-[(R)-dihydrolipoyl]-L-lysyl-[protein] + (6R)-5,10-methylene-5,6,7,8-tetrahydrofolate + NH4(+). Its function is as follows. The glycine cleavage system catalyzes the degradation of glycine. The protein is Aminomethyltransferase of Pectobacterium carotovorum subsp. carotovorum (strain PC1).